Reading from the N-terminus, the 439-residue chain is AP-2 complex subunit mu (439 aa).

The MHD domain occupies 172 to 438 (RNELYIDVVE…LTKAGTYQNR (267 aa)).

Belongs to the adaptor complexes medium subunit family. Adaptor protein complex 2 (AP-2) is a heterotetramer composed of two large adaptins (alpha-type and beta-type subunits), a medium adaptin (mu-type subunit AP50) and a small adaptin (sigma-type subunit AP17). Post-translationally, phosphorylated.

Its subcellular location is the cell membrane. The protein resides in the membrane. It is found in the coated pit. Functionally, component of the adaptor complexes which link clathrin to receptors in coated vesicles. Clathrin-associated protein complexes are believed to interact with the cytoplasmic tails of membrane proteins, leading to their selection and concentration. AP50 is a subunit of the plasma membrane adaptor. The polypeptide is AP-2 complex subunit mu (apm2) (Dictyostelium discoideum (Social amoeba)).